A 334-amino-acid chain; its full sequence is Putative 2-hydroxyacid dehydrogenase UNK4.10 (334 aa).

NAD(+)-binding positions include 166–167 (GI), 244–246 (TAR), and D270. Residue R246 is part of the active site. Residue E275 is part of the active site. The active-site Proton donor is H293. 293-296 (HLGT) contributes to the NAD(+) binding site.

The protein belongs to the D-isomer specific 2-hydroxyacid dehydrogenase family.

The sequence is that of Putative 2-hydroxyacid dehydrogenase UNK4.10 from Schizosaccharomyces pombe (strain 972 / ATCC 24843) (Fission yeast).